A 145-amino-acid polypeptide reads, in one-letter code: Flagellar assembly factor FliW (145 aa).

The protein belongs to the FliW family. As to quaternary structure, interacts with translational regulator CsrA and flagellin(s).

The protein resides in the cytoplasm. Its function is as follows. Acts as an anti-CsrA protein, binds CsrA and prevents it from repressing translation of its target genes, one of which is flagellin. Binds to flagellin and participates in the assembly of the flagellum. This is Flagellar assembly factor FliW from Clostridium kluyveri (strain NBRC 12016).